The sequence spans 220 residues: Type II restriction enzyme NspV (220 aa).

It catalyses the reaction Endonucleolytic cleavage of DNA to give specific double-stranded fragments with terminal 5'-phosphates.. Functionally, a P subtype restriction enzyme that recognizes the double-stranded sequence 5'-TTCGAA-3' and cleaves after T-2. This chain is Type II restriction enzyme NspV, found in Nostoc sp. (strain ATCC 29411 / PCC 7524).